Here is a 1080-residue protein sequence, read N- to C-terminus: Presequence protease 2, chloroplastic/mitochondrial (1080 aa).

The N-terminal 84 residues, 1–84, are a transit peptide targeting the chloroplast and mitochondrion; it reads MLRSLTCSST…NGQFSRLSIR (84 aa). His161 lines the Zn(2+) pocket. Glu164 serves as the catalytic Proton acceptor. His165 contacts Zn(2+). Glu239 is a catalytic residue. Glu261 lines the Zn(2+) pocket. Residue Arg704 participates in Mg(2+) binding.

Belongs to the peptidase M16 family. PreP subfamily. As to quaternary structure, homodimer. Requires Zn(2+) as cofactor. Mg(2+) serves as cofactor. Expressed in leaves, flowers and roots, but not detected in siliques and shoots.

It localises to the plastid. It is found in the chloroplast stroma. Its subcellular location is the mitochondrion matrix. With respect to regulation, completely inhibited by the metal chelator orthophenanthroline. Its function is as follows. ATP-independent protease that degrades both mitochondrial and chloroplastic transit peptides after their cleavage. Also degrades other unstructured peptides. Specific for peptides in the range of 10 to 65 residues. Shows a preference for cleavage after small polar residues and before basic residues, but without any positional preference. The chain is Presequence protease 2, chloroplastic/mitochondrial (PREP2) from Arabidopsis thaliana (Mouse-ear cress).